A 292-amino-acid polypeptide reads, in one-letter code: Cyclin-dependent-like kinase 5 (292 aa).

Residues 4-286 (YDKMEKIGEG…ADAALRHAYF (283 aa)) enclose the Protein kinase domain. Residues 10-18 (IGEGTYGTV) and lysine 33 each bind ATP. Aspartate 126 acts as the Proton acceptor in catalysis. Mg(2+)-binding residues include asparagine 131 and aspartate 144.

This sequence belongs to the protein kinase superfamily. CMGC Ser/Thr protein kinase family. CDC2/CDKX subfamily. As to quaternary structure, heterodimer composed of a catalytic subunit cdk-5 and a regulatory subunit cdka-1. Interaction with cdka-1 is required for cdk-5 activation. Mg(2+) serves as cofactor.

It is found in the cytoplasm. It localises to the cell projection. Its subcellular location is the dendrite. The catalysed reaction is L-seryl-[protein] + ATP = O-phospho-L-seryl-[protein] + ADP + H(+). The enzyme catalyses L-threonyl-[protein] + ATP = O-phospho-L-threonyl-[protein] + ADP + H(+). Its function is as follows. Proline-directed serine/threonine-protein kinase which, in several motor neurons, promotes the polarized trafficking of synaptic vesicles and dense-core vesicles (DCV). In the ventral nerve cord, phosphorylates lin-10 and thereby prevents lin-10-mediated anterograde trafficking of the glutamate receptor glr-1. Involved in the inhibition of glr-1 trafficking in hypoxic conditions. In DA motor neurons but not in DB motor neurons, regulates axonal transport of synaptic vesicle precursors by inhibiting dynein-mediated retrograde transport. Regulates the trafficking of dense-core vesicles in DA and DB motor neurons by promoting anterograde trafficking to the axon and preventing dynein-dependent trafficking to the dendrite. May regulate these processes in association with cdka-1/p35. Activity may be regulated by cyy-1. Involved in synapse formation during DD motor neuron remodeling by regulating transport of disassembled synaptic material to the new synaptic sites probably by activating the motor protein unc-104/kinesin-3. Regulates microtubule polarity in the dendrite of DB motor neurons. May also play a role in GABAergic synaptic vesicle localization in the ventral nerve cord. The protein is Cyclin-dependent-like kinase 5 of Caenorhabditis elegans.